A 190-amino-acid chain; its full sequence is Large ribosomal subunit protein uL6 (190 aa).

It belongs to the universal ribosomal protein uL6 family.

The polypeptide is Large ribosomal subunit protein uL6 (RpL9) (Spodoptera frugiperda (Fall armyworm)).